The sequence spans 262 residues: Pyridoxine 5'-phosphate synthase (262 aa).

Asn-6 contributes to the 3-amino-2-oxopropyl phosphate binding site. 8–9 (DH) contacts 1-deoxy-D-xylulose 5-phosphate. Arg-17 contacts 3-amino-2-oxopropyl phosphate. Catalysis depends on His-43, which acts as the Proton acceptor. 1-deoxy-D-xylulose 5-phosphate contacts are provided by Arg-45 and His-50. Residue Glu-70 is the Proton acceptor of the active site. Thr-102 serves as a coordination point for 1-deoxy-D-xylulose 5-phosphate. Residue His-215 is the Proton donor of the active site. 3-amino-2-oxopropyl phosphate-binding positions include Gly-216 and 237-238 (GH).

This sequence belongs to the PNP synthase family. In terms of assembly, homooctamer; tetramer of dimers.

It is found in the cytoplasm. It carries out the reaction 3-amino-2-oxopropyl phosphate + 1-deoxy-D-xylulose 5-phosphate = pyridoxine 5'-phosphate + phosphate + 2 H2O + H(+). Its pathway is cofactor biosynthesis; pyridoxine 5'-phosphate biosynthesis; pyridoxine 5'-phosphate from D-erythrose 4-phosphate: step 5/5. Catalyzes the complicated ring closure reaction between the two acyclic compounds 1-deoxy-D-xylulose-5-phosphate (DXP) and 3-amino-2-oxopropyl phosphate (1-amino-acetone-3-phosphate or AAP) to form pyridoxine 5'-phosphate (PNP) and inorganic phosphate. This is Pyridoxine 5'-phosphate synthase from Helicobacter pylori (strain P12).